The sequence spans 511 residues: Bifunctional purine biosynthesis protein PurH (511 aa).

Residues 1–145 form the MGS-like domain; sequence MKRRALVSVS…KNHQHVTVVV (145 aa).

This sequence belongs to the PurH family.

The enzyme catalyses (6R)-10-formyltetrahydrofolate + 5-amino-1-(5-phospho-beta-D-ribosyl)imidazole-4-carboxamide = 5-formamido-1-(5-phospho-D-ribosyl)imidazole-4-carboxamide + (6S)-5,6,7,8-tetrahydrofolate. It carries out the reaction IMP + H2O = 5-formamido-1-(5-phospho-D-ribosyl)imidazole-4-carboxamide. It functions in the pathway purine metabolism; IMP biosynthesis via de novo pathway; 5-formamido-1-(5-phospho-D-ribosyl)imidazole-4-carboxamide from 5-amino-1-(5-phospho-D-ribosyl)imidazole-4-carboxamide (10-formyl THF route): step 1/1. It participates in purine metabolism; IMP biosynthesis via de novo pathway; IMP from 5-formamido-1-(5-phospho-D-ribosyl)imidazole-4-carboxamide: step 1/1. The sequence is that of Bifunctional purine biosynthesis protein PurH from Halalkalibacterium halodurans (strain ATCC BAA-125 / DSM 18197 / FERM 7344 / JCM 9153 / C-125) (Bacillus halodurans).